Here is a 430-residue protein sequence, read N- to C-terminus: Putative O-antigen transporter (430 aa).

Transmembrane regions (helical) follow at residues 23 to 39, 45 to 61, 96 to 112, 131 to 147, 163 to 179, 192 to 208, 236 to 252, 266 to 282, 309 to 325, 342 to 358, 373 to 389, and 400 to 416; these read IIIA…LISM, YAIF…CSAV, IAII…SGVI, LFFT…IGAI, LLNA…LLYI, LIVL…CYIV, LFTL…YMVI, VTMK…TAIL, ILLG…FIYL, VSIL…CIRV, LKIL…IGGI, and ISGV…LTVF.

It localises to the cell inner membrane. Its pathway is bacterial outer membrane biogenesis; LPS O-antigen biosynthesis. Functionally, may be involved in the translocation process of the nascent O-polysaccharide molecules and/or its ligation to lipid A core units. This chain is Putative O-antigen transporter (rfbX), found in Salmonella typhimurium (strain LT2 / SGSC1412 / ATCC 700720).